Consider the following 593-residue polypeptide: NADH-quinone oxidoreductase subunit C/D (593 aa).

Residues 1-184 (MTADTAVSIP…DPFSLTLAKQ (184 aa)) form an NADH dehydrogenase I subunit C region. The NADH dehydrogenase I subunit D stretch occupies residues 208–593 (DYMFLNLGPN…IDFVMADVDR (386 aa)).

In the N-terminal section; belongs to the complex I 30 kDa subunit family. It in the C-terminal section; belongs to the complex I 49 kDa subunit family. In terms of assembly, NDH-1 is composed of 13 different subunits. Subunits NuoB, CD, E, F, and G constitute the peripheral sector of the complex.

The protein resides in the cell inner membrane. The enzyme catalyses a quinone + NADH + 5 H(+)(in) = a quinol + NAD(+) + 4 H(+)(out). In terms of biological role, NDH-1 shuttles electrons from NADH, via FMN and iron-sulfur (Fe-S) centers, to quinones in the respiratory chain. The immediate electron acceptor for the enzyme in this species is believed to be ubiquinone. Couples the redox reaction to proton translocation (for every two electrons transferred, four hydrogen ions are translocated across the cytoplasmic membrane), and thus conserves the redox energy in a proton gradient. This chain is NADH-quinone oxidoreductase subunit C/D, found in Ectopseudomonas mendocina (strain ymp) (Pseudomonas mendocina).